Reading from the N-terminus, the 380-residue chain is MYLKHIHLYGFRNYHEQTLDLQSQKTILLGNNAQGKSNLLEAVELLATLKSHRTNRDRDLILEGKKTGQILAMVERTYGESELGITFRSPGRRSLMLNHENLRRHLDFLGHINAVEFSCLDLDLVRGSPETRRSWLDTLLIQLEPVYASIIHQYYKILRQRNALLKVIRKTVEEQENSSNLSAELSQLKVWDQQLAEAGTRVTRRRYRVIERITPLAQKWHQEISSGTEILAINYLPNIKIENEDPQQVQQAFLDKIEQRRMAEQQLATTVVGPHRDDVEFNINHTPAKSYGSQGQQRTLVLAIKLAELQLIEEVIGEPPLLLLDDVLAELDPNRQNQLLEVIQGRFQTLITTTYLHSFDAQWLNSSQIMKVEGGKIAQL.

30 to 37 (GNNAQGKS) provides a ligand contact to ATP.

It belongs to the RecF family.

Its subcellular location is the cytoplasm. Functionally, the RecF protein is involved in DNA metabolism; it is required for DNA replication and normal SOS inducibility. RecF binds preferentially to single-stranded, linear DNA. It also seems to bind ATP. The chain is DNA replication and repair protein RecF from Crocosphaera subtropica (strain ATCC 51142 / BH68) (Cyanothece sp. (strain ATCC 51142)).